The primary structure comprises 438 residues: Forkhead box protein J1 (438 aa).

The segment at residues 123-217 is a DNA-binding region (fork-head); it reads KPPYSYATLI…MNGAMKKRRL (95 aa).

Belongs to the FOXJ1 family.

It localises to the nucleus. Functionally, key transcription factor required for motile ciliogenesis. Activates genes essential for motile cilia formation and function. This is Forkhead box protein J1 from Xenopus tropicalis (Western clawed frog).